We begin with the raw amino-acid sequence, 1088 residues long: TBC1 domain family member 31 (1088 aa).

Residues 1-20 (MQTTDLGNKESGKIWHRKPN) form a disordered region. 7 WD repeats span residues 33-74 (HVDA…LNRN), 75-116 (RFDL…TGAK), 117-157 (ELVS…LDTF), 158-200 (QRKR…SDTL), 201-248 (ACKY…SKQL), 249-296 (FRII…IQTC), and 297-334 (KLVF…NIYS). The tract at residues 356 to 381 (SKDKDSTGNKSGVSGASQEKVRVSSG) is disordered. Positions 363–372 (GNKSGVSGAS) are enriched in polar residues. The Rab-GAP TBC domain occupies 432 to 607 (EYPAKYRMFI…RLFDNVFSNH (176 aa)). Coiled-coil stretches lie at residues 736-903 (QQQE…VETD) and 1048-1076 (RGEL…ARRK).

It localises to the cytoplasm. The protein localises to the cytoskeleton. Its subcellular location is the microtubule organizing center. The protein resides in the centrosome. It is found in the centriolar satellite. It localises to the cilium basal body. In terms of biological role, molecular adapter which is involved in cilium biogenesis. Part of a functional complex including OFD1 a centriolar protein involved in cilium assembly. Could regulate the cAMP-dependent phosphorylation of OFD1, and its subsequent ubiquitination by PJA2 which ultimately leads to its proteasomal degradation. The chain is TBC1 domain family member 31 from Xenopus tropicalis (Western clawed frog).